The sequence spans 2311 residues: Protein Ycf2 (2311 aa).

1652 to 1659 contributes to the ATP binding site; sequence GSIGTGRS.

The protein belongs to the Ycf2 family.

The protein resides in the plastid. Its subcellular location is the chloroplast stroma. In terms of biological role, probable ATPase of unknown function. Its presence in a non-photosynthetic plant (Epifagus virginiana) and experiments in tobacco indicate that it has an essential function which is probably not related to photosynthesis. This is Protein Ycf2 from Lemna minor (Common duckweed).